The following is a 404-amino-acid chain: MFQINDNFQKLPGSYLFSTIAKKVAAYQEANPDKEIIRLGIGDVTQPLAPAIIDALHKAVDEMGNAATFHGYAPDLGYEFLRKAISDNDYKARGCDISADEIFVSDGAKSDSANIQELFSANSRIAVTDPVYPVYVDSNVMAGRTGTYDAQTETWSNVIYMPSTADNGFVPELPKEVPDMIYLCLPNNPTGTTLKKEQLQVWVDYANKNGSVIIFDAAYEAYISEADVPHSIYECNGAKTCAIELRSFSKNAGFTGVRLGFTVVPKELKCGDVSLHAMWARRHGTKFNGAPYIVQRAGEAVYSDAGKAQLKDQVAYYMNNAKTIKTGLAEAGFTVYGGVNAPYIWLKTPDQMTSWEFFDYLLENANVVGTPGSGFGPSGEGYFRLTAFGNYENTVKALERIKAL.

Residues Tyr-15 and Gly-42 each contribute to the substrate site. Pyridoxal 5'-phosphate contacts are provided by residues Tyr-72, 108 to 109, Tyr-132, Asn-188, Tyr-219, and 247 to 249; these read AK and SFS. Residues Lys-109, Tyr-132, and Asn-188 each coordinate substrate. N6-(pyridoxal phosphate)lysine is present on Lys-250. Positions 258 and 288 each coordinate pyridoxal 5'-phosphate. Residues Asn-288 and Arg-384 each contribute to the substrate site.

Belongs to the class-I pyridoxal-phosphate-dependent aminotransferase family. LL-diaminopimelate aminotransferase subfamily. In terms of assembly, homodimer. It depends on pyridoxal 5'-phosphate as a cofactor.

The enzyme catalyses (2S,6S)-2,6-diaminopimelate + 2-oxoglutarate = (S)-2,3,4,5-tetrahydrodipicolinate + L-glutamate + H2O + H(+). It participates in amino-acid biosynthesis; L-lysine biosynthesis via DAP pathway; LL-2,6-diaminopimelate from (S)-tetrahydrodipicolinate (aminotransferase route): step 1/1. Functionally, involved in the synthesis of meso-diaminopimelate (m-DAP or DL-DAP), required for both lysine and peptidoglycan biosynthesis. Catalyzes the direct conversion of tetrahydrodipicolinate to LL-diaminopimelate. The chain is LL-diaminopimelate aminotransferase from Agathobacter rectalis (strain ATCC 33656 / DSM 3377 / JCM 17463 / KCTC 5835 / VPI 0990) (Eubacterium rectale).